We begin with the raw amino-acid sequence, 219 residues long: Vesicle-associated membrane protein 721 (219 aa).

The Cytoplasmic segment spans residues 1–196; the sequence is MAQQSLIYSF…MWLQNMKIKL (196 aa). A Longin domain is found at 10–114; it reads FVARGTVILV…SLNKEFGSKL (105 aa). In terms of domain architecture, v-SNARE coiled-coil homology spans 130–190; that stretch reads KLAKVKAQVS…TQMRRKMWLQ (61 aa). A helical; Anchor for type IV membrane protein transmembrane segment spans residues 197-217; it reads IVLAIIIALILIIVLSVCHGF. Over 218 to 219 the chain is Vesicular; it reads KC.

This sequence belongs to the synaptobrevin family. Expressed in flowers, leaves, stems and roots.

It localises to the cell membrane. Its subcellular location is the early endosome membrane. Its function is as follows. Involved in the targeting and/or fusion of transport vesicles to their target membrane. The protein is Vesicle-associated membrane protein 721 of Arabidopsis thaliana (Mouse-ear cress).